The chain runs to 1349 residues: MIWYVATFIASVIGTRGLAAEGAHGLREEPEFVTARAGESVVLRCDVIHPVTGQPPPYVVEWFKFGVPIPIFIKFGYYPPHVDPEYAGRASLHDKASLRLEQVRSEDQGWYECKVLMLDQQYDTFHNGSWVHLTINAPPTFTETPPQYIEAKEGGSITMTCTAFGNPKPIVTWLKEGTLLGASGKYQVSDGSLTVTSVSREDRGAYTCRAYSIQGEAVHTTHLLVQGPPFIVSPPENITVNISQDALLTCRAEAYPGNLTYTWYWQDENVYFQNDLKLRVRILIDGTLIIFRVKPEDSGKYTCVPSNSLGRSPSASAYLTVQYPARVLNMPPVIYVPVGIHGYIRCPVDAEPPATVVKWNKDGRPLQVEKNLGWTLMEDGSIRIEEATEEALGTYTCVPYNTLGTMGQSAPARLVLKDPPYFTVLPGWEYRQEAGRELLIPCAAAGDPFPVITWRKVGKPSRSKHSALPSGSLQFRALSKEDHGEWECVATNVVTSITASTHLTVIGTSPHAPGSVRVQVSMTTANVSWEPGYDGGYEQTFSVWMKRAQFGPHDWLSLPVPPGPSWLLVDTLEPETAYQFSVLAQNKLGTSAFSEVVTVNTLAFPITTPEPLVLVTPPRCLIANRTQQGVLLSWLPPANHSFPIDRYIMEFRVAERWELLDDGIPGTEGEFFAKDLSQDTWYEFRVLAVMQDLISEPSNIAGVSSTDIFPQPDLTEDGLARPVLAGIVATICFLAAAILFSTLAACFVNKQRKRKLKRKKDPPLSITHCRKSLESPLSSGKVSPESIRTLRAPSESSDDQGQPAAKRMLSPTREKELSLYKKTKRAISSKKYSVAKAEAEAEATTPIELISRGPDGRFVMDPAEMEPSLKSRRIEGFPFAEETDMYPEFRQSDEENEDPLVPTSVAALKSQLTPLSSSQESYLPPPAYSPRFQPRGLEGPGGLEGRLQATGQARPPAPRPFHHGQYYGYLSSSSPGEVEPPPFYVPEVGSPLSSVMSSPPLPTEGPFGHPTIPEENGENASNSTLPLTQTPTGGRSPEPWGRPEFPFGGLETPAMMFPHQLPPCDVPESLQPKAGLPRGLPPTSLQVPAAYPGILSLEAPKGWAGKSPGRGPVPAPPAAKWQDRPMQPLVSQGQLRHTSQGMGIPVLPYPEPAEPGAHGGPSTFGLDTRWYEPQPRPRPSPRQARRAEPSLHQVVLQPSRLSPLTQSPLSSRTGSPELAARARPRPGLLQQAEMSEITLQPPAAVSFSRKSTPSTGSPSQSSRSGSPSYRPAMGFTTLATGYPSPPPGPAPAGPGDSLDVFGQTPSPRRTGEELLRPETPPPTLPTSGKLQRDRPAPATSPPERALSKL.

The first 20 residues, 1 to 20, serve as a signal peptide directing secretion; the sequence is MIWYVATFIASVIGTRGLAA. Residues 21–722 are Extracellular-facing; it reads EGAHGLREEP…DLTEDGLARP (702 aa). 5 consecutive Ig-like domains span residues 24-129, 139-226, 228-320, 324-415, and 420-504; these read HGLR…HNGS, PTFT…LLVQ, PPFI…AYLT, PARV…ARLV, and PYFT…THLT. 2 disulfides stabilise this stretch: C45/C113 and C161/C208. N-linked (GlcNAc...) asparagine glycosylation is found at N241 and N258. Disulfide bonds link C250–C303, C346–C397, and C442–C488. Fibronectin type-III domains are found at residues 512–604 and 614–708; these read APGS…TLAF and LVTP…STDI. The N-linked (GlcNAc...) asparagine glycan is linked to N624. The chain crosses the membrane as a helical span at residues 723-743; it reads VLAGIVATICFLAAAILFSTL. The Cytoplasmic segment spans residues 744 to 1349; the sequence is AACFVNKQRK…SPPERALSKL (606 aa). Disordered stretches follow at residues 758 to 817, 911 to 1081, and 1099 to 1349; these read RKKD…EKEL, QLTP…RGLP, and APKG…LSKL. Residues S775, S783, and S794 each carry the phosphoserine modification. A compositionally biased stretch (polar residues) spans 911–921; sequence QLTPLSSSQES. Low complexity predominate over residues 985 to 998; that stretch reads VPEVGSPLSSVMSS. Polar residues-rich tracts occupy residues 1018–1033, 1129–1141, and 1199–1214; these read ENASNSTLPLTQTPTG, LVSQGQLRHTSQG, and SRLSPLTQSPLSSRTG. R1136 carries the post-translational modification Omega-N-methylarginine. Residues S1207 and S1215 each carry the phosphoserine modification. Low complexity predominate over residues 1251 to 1271; it reads STPSTGSPSQSSRSGSPSYRP. The segment covering 1283-1292 has biased composition (pro residues); that stretch reads PSPPPGPAPA.

It belongs to the immunoglobulin superfamily. Turtle family. Found in a complex with MAGI2 and NLGN2, where it interacts with MAGI2 (via PDZ 5 and PDZ 6 domains). Post-translationally, N-glycosylated and sialylated. Not significantly O-glycosylated.

The protein localises to the postsynaptic cell membrane. It localises to the postsynaptic density. In terms of biological role, transmembrane protein which is abundantly expressed in interneurons, where it may regulate inhibitory synapse development. May mediate homophilic cell adhesion. This chain is Protein turtle homolog B (IGSF9B), found in Homo sapiens (Human).